Reading from the N-terminus, the 710-residue chain is Exocyst complex component 5 (710 aa).

The stretch at 44–96 (DTFIQTIKDLKILQEKQQSKCERLEESLRQEKESHAKKIAKLQERHQTAIDVF) forms a coiled coil.

This sequence belongs to the SEC10 family. As to quaternary structure, the exocyst complex is composed of Sec3/Exoc1, Sec5/Exoc2, Sec6/Exoc3, Sec8/Exoc4, Sec10/Exoc5, Sec15/Exoc6, Exo70/Exoc7 and Exo84/Exoc8.

Functionally, component of the exocyst complex involved in the docking of exocytic vesicles with fusion sites on the plasma membrane. The protein is Exocyst complex component 5 of Drosophila melanogaster (Fruit fly).